The following is a 117-amino-acid chain: Photosystem II reaction center Psb28 protein (117 aa).

It belongs to the Psb28 family. Part of the photosystem II complex.

It localises to the cellular thylakoid membrane. In Prochlorococcus marinus (strain MIT 9515), this protein is Photosystem II reaction center Psb28 protein.